We begin with the raw amino-acid sequence, 130 residues long: Small ribosomal subunit protein uS9 (130 aa).

Belongs to the universal ribosomal protein uS9 family.

The polypeptide is Small ribosomal subunit protein uS9 (Serratia proteamaculans (strain 568)).